A 513-amino-acid polypeptide reads, in one-letter code: Glutamate--tRNA ligase 2 (513 aa).

Positions 11–21 match the 'HIGH' region motif; that stretch reads PSPTGFLHIGS. Residues 240–244 carry the 'KMSKS' region motif; that stretch reads KLSKR. ATP is bound at residue Lys243. The RPE1 insert domain occupies 335–383; that stretch reads NTLLRHLPYREEFGGNTERSTAAYIDIREDASTGLTYKLPLAVELPKKF.

This sequence belongs to the class-I aminoacyl-tRNA synthetase family. Glutamate--tRNA ligase type 1 subfamily. As to quaternary structure, monomer.

Its subcellular location is the cytoplasm. The enzyme catalyses tRNA(Glu) + L-glutamate + ATP = L-glutamyl-tRNA(Glu) + AMP + diphosphate. In terms of biological role, catalyzes the attachment of glutamate to tRNA(Glu) in a two-step reaction: glutamate is first activated by ATP to form Glu-AMP and then transferred to the acceptor end of tRNA(Glu). The polypeptide is Glutamate--tRNA ligase 2 (Rickettsia conorii (strain ATCC VR-613 / Malish 7)).